A 612-amino-acid polypeptide reads, in one-letter code: DNA mismatch repair protein MutL (612 aa).

This sequence belongs to the DNA mismatch repair MutL/HexB family.

Its function is as follows. This protein is involved in the repair of mismatches in DNA. It is required for dam-dependent methyl-directed DNA mismatch repair. May act as a 'molecular matchmaker', a protein that promotes the formation of a stable complex between two or more DNA-binding proteins in an ATP-dependent manner without itself being part of a final effector complex. The polypeptide is DNA mismatch repair protein MutL (Afipia carboxidovorans (strain ATCC 49405 / DSM 1227 / KCTC 32145 / OM5) (Oligotropha carboxidovorans)).